Reading from the N-terminus, the 257-residue chain is Pyridoxine 5'-phosphate synthase (257 aa).

Asn-6 serves as a coordination point for 3-amino-2-oxopropyl phosphate. 8 to 9 contributes to the 1-deoxy-D-xylulose 5-phosphate binding site; the sequence is DH. Arg-17 provides a ligand contact to 3-amino-2-oxopropyl phosphate. His-41 acts as the Proton acceptor in catalysis. Arg-43 and His-48 together coordinate 1-deoxy-D-xylulose 5-phosphate. Glu-68 (proton acceptor) is an active-site residue. Thr-98 serves as a coordination point for 1-deoxy-D-xylulose 5-phosphate. His-210 functions as the Proton donor in the catalytic mechanism. 3-amino-2-oxopropyl phosphate-binding positions include Gly-211 and 232-233; that span reads GQ.

Belongs to the PNP synthase family. Homooctamer; tetramer of dimers.

The protein localises to the cytoplasm. It catalyses the reaction 3-amino-2-oxopropyl phosphate + 1-deoxy-D-xylulose 5-phosphate = pyridoxine 5'-phosphate + phosphate + 2 H2O + H(+). Its pathway is cofactor biosynthesis; pyridoxine 5'-phosphate biosynthesis; pyridoxine 5'-phosphate from D-erythrose 4-phosphate: step 5/5. Catalyzes the complicated ring closure reaction between the two acyclic compounds 1-deoxy-D-xylulose-5-phosphate (DXP) and 3-amino-2-oxopropyl phosphate (1-amino-acetone-3-phosphate or AAP) to form pyridoxine 5'-phosphate (PNP) and inorganic phosphate. This chain is Pyridoxine 5'-phosphate synthase, found in Campylobacter jejuni subsp. jejuni serotype O:2 (strain ATCC 700819 / NCTC 11168).